The primary structure comprises 126 residues: Histone H2B 8 (126 aa).

Low complexity predominate over residues 1–12 (MPEPAKSAPAPK). A disordered region spans residues 1–35 (MPEPAKSAPAPKKGSKKAVTKTQKKGDKKRRKTRK). N6-acetyllysine is present on residues lysine 6 and lysine 13. The segment covering 13-34 (KGSKKAVTKTQKKGDKKRRKTR) has biased composition (basic residues). The residue at position 15 (serine 15) is a Phosphoserine. 2 positions are modified to N6-acetyllysine: lysine 16 and lysine 21. Serine 113 carries an O-linked (GlcNAc) serine glycan. A Glycyl lysine isopeptide (Lys-Gly) (interchain with G-Cter in ubiquitin) cross-link involves residue lysine 121.

The protein belongs to the histone H2B family. As to quaternary structure, the nucleosome is a histone octamer containing two molecules each of H2A, H2B, H3 and H4 assembled in one H3-H4 heterotetramer and two H2A-H2B heterodimers. The octamer wraps approximately 147 bp of DNA. Monoubiquitination of Lys-121 by the BRE1 gives a specific tag for epigenetic transcriptional activation and is also prerequisite for histone H3 'Lys-4' and 'Lys-79' methylation. In terms of processing, phosphorylated on Ser-15 during apoptosis; which facilitates apoptotic chromatin condensation. Post-translationally, glcNAcylation at Ser-113 promotes monoubiquitination of Lys-121. It fluctuates in response to extracellular glucose, and associates with transcribed genes.

The protein resides in the nucleus. It localises to the chromosome. Its function is as follows. Core component of nucleosome. Nucleosomes wrap and compact DNA into chromatin, limiting DNA accessibility to the cellular machineries which require DNA as a template. Histones thereby play a central role in transcription regulation, DNA repair, DNA replication and chromosomal stability. DNA accessibility is regulated via a complex set of post-translational modifications of histones, also called histone code, and nucleosome remodeling. The protein is Histone H2B 8 (H2B-VIII) of Gallus gallus (Chicken).